A 602-amino-acid polypeptide reads, in one-letter code: Potassium voltage-gated channel subfamily A member 5 (602 aa).

Residues 1–202 (MEISLVPLEN…FYQLGDEAME (202 aa)) are tetramerization domain. Residues 1-238 (MEISLVPLEN…LIFEYPESSG (238 aa)) lie on the Cytoplasmic side of the membrane. The tract at residues 58–107 (EDANQGGRPLPPMAQELPQPRRLSAEDEEGEGDPGLGTVEEDQAPQDAGS) is disordered. Serine 81 bears the Phosphoserine; by CK2 and PKA mark. Lysine 212 is covalently cross-linked (Glycyl lysine isopeptide (Lys-Gly) (interchain with G-Cter in SUMO)). Residues 239-260 (SARAIAIVSVLVILISIITFCL) traverse the membrane as a helical segment. Residues 261 to 314 (ETLPEFRDERELLRHPPVPPQPPAPAPGINGSVSGALSSGPTVAPLLPRTLADP) lie on the Extracellular side of the membrane. A helical transmembrane segment spans residues 315 to 336 (FFIVETTCVIWFTFELLVRFFA). The S-palmitoyl cysteine moiety is linked to residue cysteine 337. Residues 337–347 (CPSKAEFSRNI) lie on the Cytoplasmic side of the membrane. The chain crosses the membrane as a helical span at residues 348 to 368 (MNIIDVVAIFPYFITLGTELA). At 369 to 384 (EQQPGGGGQNGQQAMS) the chain is on the extracellular side. The chain crosses the membrane as a helical; Voltage-sensor span at residues 385–405 (LAILRVIRLVRVFRIFKLSRH). At 406–420 (SKGLQILGKTLQASM) the chain is on the cytoplasmic side. The S4-S5 linker stretch occupies residues 407–420 (KGLQILGKTLQASM). A helical membrane pass occupies residues 421-442 (RELGLLIFFLFIGVILFSSAVY). Over 443-456 (FAEADNHGSHFSSI) the chain is Extracellular. Residues 457 to 468 (PDAFWWAVVTMT) constitute an intramembrane region (helical). Residues 469-474 (TVGYGD) carry the Selectivity filter motif. The stretch at 469–476 (TVGYGDMR) is an intramembrane region. Over 477–483 (PITVGGK) the chain is Extracellular. Residues 484 to 512 (IVGSLCAIAGVLTIALPVPVIVSNFNYFY) traverse the membrane as a helical segment. At 513–602 (HRETDHEEQA…CLDTSRETDL (90 aa)) the chain is on the cytoplasmic side. The segment covering 523–536 (ALKEEQGNQRRESG) has biased composition (basic and acidic residues). Positions 523-543 (ALKEEQGNQRRESGLDTGGQR) are disordered. Residue lysine 525 forms a Glycyl lysine isopeptide (Lys-Gly) (interchain with G-Cter in SUMO) linkage. Phosphoserine; by PKA is present on residues serine 535, serine 546, and serine 569. The PDZ-binding signature appears at 600–602 (TDL).

It belongs to the potassium channel family. A (Shaker) (TC 1.A.1.2) subfamily. Kv1.5/KCNA5 sub-subfamily. As to quaternary structure, homotetramer and heterotetramer of potassium channel proteins. Interacts with DLG1, which enhances channel currents. Forms a ternary complex with DLG1 and CAV3. Interacts with KCNAB1. Interacts with UBE2I. Interacts with XIRP2; the interaction is required for normal action potential configuration in the heart. Glycosylated. Post-translationally, sumoylated on Lys-212, and Lys-525, preferentially with SUMO3. Sumoylation regulates the voltage sensitivity of the channel. Expressed equally in atrium, ventricle, aorta and skeletal muscle. Weaker expression in brain.

It localises to the cell membrane. The catalysed reaction is K(+)(in) = K(+)(out). In terms of biological role, voltage-gated potassium channel that mediates transmembrane potassium transport in excitable membranes. Forms tetrameric potassium-selective channels through which potassium ions pass in accordance with their electrochemical gradient. The channel alternates between opened and closed conformations in response to the voltage difference across the membrane. Can form functional homotetrameric channels and heterotetrameric channels that contain variable proportions of KCNA1, KCNA2, KCNA4, KCNA5, and possibly other family members as well; channel properties depend on the type of alpha subunits that are part of the channel. Channel properties are modulated by cytoplasmic beta subunits that regulate the subcellular location of the alpha subunits and promote rapid inactivation. Homotetrameric channels display rapid activation and slow inactivation. Required for normal electrical conduction including formation of the infranodal ventricular conduction system and normal action potential configuration, as a result of its interaction with XIRP2. May play a role in regulating the secretion of insulin in normal pancreatic islets. The chain is Potassium voltage-gated channel subfamily A member 5 (Kcna5) from Rattus norvegicus (Rat).